We begin with the raw amino-acid sequence, 115 residues long: T cell receptor beta variable 18 (115 aa).

The N-terminal stretch at 1 to 21 is a signal peptide; the sequence is MDTRLLCCAVICLLGAGLSNA. Positions 22–115 constitute an Ig-like domain; it reads GVMQNPRHLV…SAAYFCASSP (94 aa). Cys42 and Cys111 are oxidised to a cystine.

Alpha-beta TR is a heterodimer composed of an alpha and beta chain; disulfide-linked. The alpha-beta TR is associated with the transmembrane signaling CD3 coreceptor proteins to form the TR-CD3 (TcR or TCR). The assembly of alpha-beta TR heterodimers with CD3 occurs in the endoplasmic reticulum where a single alpha-beta TR heterodimer associates with one CD3D-CD3E heterodimer, one CD3G-CD3E heterodimer and one CD247 homodimer forming a stable octameric structure. CD3D-CD3E and CD3G-CD3E heterodimers preferentially associate with TR alpha and TR beta chains, respectively. The association of the CD247 homodimer is the last step of TcR assembly in the endoplasmic reticulum and is required for transport to the cell surface.

It localises to the cell membrane. In terms of biological role, v region of the variable domain of T cell receptor (TR) beta chain that participates in the antigen recognition. Alpha-beta T cell receptors are antigen specific receptors which are essential to the immune response and are present on the cell surface of T lymphocytes. Recognize peptide-major histocompatibility (MH) (pMH) complexes that are displayed by antigen presenting cells (APC), a prerequisite for efficient T cell adaptive immunity against pathogens. Binding of alpha-beta TR to pMH complex initiates TR-CD3 clustering on the cell surface and intracellular activation of LCK that phosphorylates the ITAM motifs of CD3G, CD3D, CD3E and CD247 enabling the recruitment of ZAP70. In turn ZAP70 phosphorylates LAT, which recruits numerous signaling molecules to form the LAT signalosome. The LAT signalosome propagates signal branching to three major signaling pathways, the calcium, the mitogen-activated protein kinase (MAPK) kinase and the nuclear factor NF-kappa-B (NF-kB) pathways, leading to the mobilization of transcription factors that are critical for gene expression and essential for T cell growth and differentiation. The T cell repertoire is generated in the thymus, by V-(D)-J rearrangement. This repertoire is then shaped by intrathymic selection events to generate a peripheral T cell pool of self-MH restricted, non-autoaggressive T cells. Post-thymic interaction of alpha-beta TR with the pMH complexes shapes TR structural and functional avidity. This chain is T cell receptor beta variable 18, found in Homo sapiens (Human).